A 134-amino-acid chain; its full sequence is Putative F-box protein R638 (134 aa).

The region spanning 5 to 52 (NIMNLLNEDCILHILSFLADKDKIQLSLSCKSNLKFLHKTIYDDIYFY) is the F-box domain.

The polypeptide is Putative F-box protein R638 (Acanthamoeba polyphaga mimivirus (APMV)).